The primary structure comprises 395 residues: Tyrosine--tRNA ligase 2 (395 aa).

The 'HIGH' region motif lies at 42-51; it reads PTAPDIHLGH. Residues 226–230 carry the 'KMSKS' region motif; it reads KMSKS. Residue lysine 229 coordinates ATP. An S4 RNA-binding domain is found at 334 to 394; it reads IAISNLLKEA…GKRKFARVTI (61 aa).

This sequence belongs to the class-I aminoacyl-tRNA synthetase family. TyrS type 2 subfamily. As to quaternary structure, homodimer.

It localises to the cytoplasm. The catalysed reaction is tRNA(Tyr) + L-tyrosine + ATP = L-tyrosyl-tRNA(Tyr) + AMP + diphosphate + H(+). Catalyzes the attachment of tyrosine to tRNA(Tyr) in a two-step reaction: tyrosine is first activated by ATP to form Tyr-AMP and then transferred to the acceptor end of tRNA(Tyr). The sequence is that of Tyrosine--tRNA ligase 2 from Vibrio cholerae serotype O1 (strain ATCC 39315 / El Tor Inaba N16961).